The chain runs to 425 residues: UDP-N-acetylglucosamine 1-carboxyvinyltransferase (425 aa).

Residue 23–24 participates in phosphoenolpyruvate binding; the sequence is KN. Residue Arg100 coordinates UDP-N-acetyl-alpha-D-glucosamine. The active-site Proton donor is Cys124. Cys124 bears the 2-(S-cysteinyl)pyruvic acid O-phosphothioketal mark. UDP-N-acetyl-alpha-D-glucosamine is bound by residues Asp313 and Ile335.

It belongs to the EPSP synthase family. MurA subfamily.

It localises to the cytoplasm. It catalyses the reaction phosphoenolpyruvate + UDP-N-acetyl-alpha-D-glucosamine = UDP-N-acetyl-3-O-(1-carboxyvinyl)-alpha-D-glucosamine + phosphate. The protein operates within cell wall biogenesis; peptidoglycan biosynthesis. Cell wall formation. Adds enolpyruvyl to UDP-N-acetylglucosamine. In Wolbachia sp. subsp. Drosophila simulans (strain wRi), this protein is UDP-N-acetylglucosamine 1-carboxyvinyltransferase.